Consider the following 327-residue polypeptide: Zinc transport protein ZntB (327 aa).

Topologically, residues 1 to 273 are cytoplasmic; that stretch reads MEAIKGSDVN…ARRTYTMSLM (273 aa). A helical membrane pass occupies residues 274–294; it reads AMVFLPSTFLTGLFGVNLGGI. Residues 295–300 lie on the Periplasmic side of the membrane; the sequence is PGGGWR. A helical transmembrane segment spans residues 301-321; that stretch reads FGFSLFCILLVVLIGGVTLWL. The Cytoplasmic segment spans residues 322-327; the sequence is HRSKWL.

Belongs to the CorA metal ion transporter (MIT) (TC 1.A.35) family.

It is found in the cell inner membrane. It carries out the reaction Zn(2+)(out) + H(+)(out) = Zn(2+)(in) + H(+)(in). In terms of biological role, zinc transporter. Acts as a Zn(2+):proton symporter, which likely mediates zinc ion uptake. This Salmonella agona (strain SL483) protein is Zinc transport protein ZntB.